Here is a 220-residue protein sequence, read N- to C-terminus: 7-cyano-7-deazaguanine synthase (220 aa).

Phe10–Leu20 contacts ATP. Residues Cys188, Cys197, Cys200, and Cys203 each contribute to the Zn(2+) site.

Belongs to the QueC family. It depends on Zn(2+) as a cofactor.

It carries out the reaction 7-carboxy-7-deazaguanine + NH4(+) + ATP = 7-cyano-7-deazaguanine + ADP + phosphate + H2O + H(+). It functions in the pathway purine metabolism; 7-cyano-7-deazaguanine biosynthesis. Functionally, catalyzes the ATP-dependent conversion of 7-carboxy-7-deazaguanine (CDG) to 7-cyano-7-deazaguanine (preQ(0)). This is 7-cyano-7-deazaguanine synthase from Neisseria meningitidis serogroup C (strain 053442).